The sequence spans 64 residues: Conotoxin Pu5.2 (64 aa).

The signal sequence occupies residues 1-22 (MRCVPVFVILLLLIASTPSVDA). The propeptide occupies 23–52 (RPNPKDDVPLASFHGADNANRILRTLWNLR). Isoleucine 63 is modified (isoleucine amide).

Belongs to the conotoxin T superfamily. In terms of processing, contains 2 disulfide bonds that can be either 'C1-C3, C2-C4' or 'C1-C4, C2-C3', since these disulfide connectivities have been observed for conotoxins with cysteine framework V (for examples, see AC P0DQQ7 and AC P81755). As to expression, expressed by the venom duct.

It is found in the secreted. This Conus pulicarius (Flea-bitten cone) protein is Conotoxin Pu5.2.